A 529-amino-acid polypeptide reads, in one-letter code: Potassium voltage-gated channel subfamily A member 6 (529 aa).

A disordered region spans residues 1–35; sequence MRSEKSLTLAAPGEVRGPEGEQQDAGEFQEAEGGG. Topologically, residues 1-171 are cytoplasmic; the sequence is MRSEKSLTLA…LLFEYPESSG (171 aa). The residue at position 3 (S3) is a Phosphoserine. The segment covering 21-30 has biased composition (acidic residues); that stretch reads EQQDAGEFQE. A helical membrane pass occupies residues 172–193; the sequence is PARGIAIVSVLVILISIVIFCL. Topologically, residues 194–262 are extracellular; sequence ETLPQFRADG…TLGGSFFTDP (69 aa). The interval 203-238 is disordered; the sequence is GRGGSNEGSGTRLSPASRSHEEEDEDEDSYAFPGSI. Residues 210–219 show a composition bias toward polar residues; the sequence is GSGTRLSPAS. Residues 263–284 form a helical membrane-spanning segment; the sequence is FFLVETLCIVWFTFELLVRFSA. Residue C285 is the site of S-palmitoyl cysteine attachment. The Cytoplasmic segment spans residues 285 to 295; the sequence is CPSKAAFFRNI. The helical transmembrane segment at 296–316 threads the bilayer; it reads MNIIDLVAIFPYFITLGTELV. Over 317 to 337 the chain is Extracellular; the sequence is QRHEQQSVSGGSGQNGQQAMS. The chain crosses the membrane as a helical; Voltage-sensor span at residues 338-358; that stretch reads LAILRVIRLVRVFRIFKLSRH. The Cytoplasmic portion of the chain corresponds to 359–373; that stretch reads SKGLQILGKTLQASM. The S4-S5 linker stretch occupies residues 360-373; sequence KGLQILGKTLQASM. The chain crosses the membrane as a helical span at residues 374–395; that stretch reads RELGLLIFFLFIGVILFSSAVY. Residues 396-409 lie on the Extracellular side of the membrane; it reads FAEADDVDSLFPSI. An intramembrane region (helical) is located at residues 410–421; it reads PDAFWWAVVTMT. Positions 422 to 427 match the Selectivity filter motif; it reads TVGYGD. The stretch at 422-429 is an intramembrane region; that stretch reads TVGYGDMY. Topologically, residues 430–436 are extracellular; the sequence is PMTVGGK. A helical transmembrane segment spans residues 437–465; the sequence is IVGSLCAIAGVLTIALPVPVIVSNFNYFY. The Cytoplasmic segment spans residues 466-529; that stretch reads HRETEQEEQG…YAEKRMLTEV (64 aa). The tract at residues 488 to 513 is disordered; that stretch reads DLKATDNGLGKPDFAEASRERRPSYL. The span at 500-510 shows a compositional bias: basic and acidic residues; it reads DFAEASRERRP. Phosphoserine; by PKA is present on S511. Residues 527–529 carry the PDZ-binding motif; it reads TEV.

The protein belongs to the potassium channel family. A (Shaker) (TC 1.A.1.2) subfamily. Kv1.6/KCNA6 sub-subfamily. In terms of assembly, homotetramer and heterotetramer of potassium channel proteins. Interacts with KCNAB1 and KCNAB2.

The protein localises to the cell membrane. It catalyses the reaction K(+)(in) = K(+)(out). Voltage-gated potassium channel that mediates transmembrane potassium transport in excitable membranes. Forms tetrameric potassium-selective channels through which potassium ions pass in accordance with their electrochemical gradient. The channel alternates between opened and closed conformations in response to the voltage difference across the membrane. Can form functional homotetrameric channels and heterotetrameric channels that contain variable proportions of KCNA1, KCNA2, KCNA4, KCNA6, and possibly other family members as well; channel properties depend on the type of alpha subunits that are part of the channel. Channel properties are modulated by cytoplasmic beta subunits that regulate the subcellular location of the alpha subunits and promote rapid inactivation. Homotetrameric channels display rapid activation and slow inactivation. This is Potassium voltage-gated channel subfamily A member 6 (Kcna6) from Mus musculus (Mouse).